A 243-amino-acid polypeptide reads, in one-letter code: MSTCPFNDVFNSTDSSMINTFLKNVQVLLEAASYIESAERKDGKCEHGYASTFPSIQHSSYQRQRKFRNKKCNNNHYRSTHNELEKNRRAHLRLCLERLKTLIPLGPECSRHTTLGLLNKAKAHIKKLEEADRKSRYQLESLEREQRHLRRRLDLLRDGGGSLEAERIRTDSMGSTPCSERSDRSDSDQEEMEVDVESTEFSHGELDSVSTASTSDLDDHSSLQSTASDEGYSSCSIKLAFSS.

In terms of domain architecture, bHLH spans 76–128 (HYRSTHNELEKNRRAHLRLCLERLKTLIPLGPECSRHTTLGLLNKAKAHIKKL). The segment at 164 to 235 (EAERIRTDSM…TASDEGYSSC (72 aa)) is disordered. The span at 188 to 198 (DQEEMEVDVES) shows a compositional bias: acidic residues. Over residues 222-235 (SLQSTASDEGYSSC) the composition is skewed to polar residues.

As to quaternary structure, efficient DNA binding requires dimerization with another bHLH protein. Binds DNA as a heterodimer with MAX.

Its subcellular location is the nucleus. Transcriptional repressor. MXI1 binds with MAX to form a sequence-specific DNA-binding protein complex which recognizes the core sequence 5'-CAC[GA]TG-3'. MXI1 thus antagonizes MYC transcriptional activity by competing for MAX. This is Max-interacting protein 1 (mxi1) from Danio rerio (Zebrafish).